The following is a 163-amino-acid chain: Nucleotide-binding protein syc0675_c (163 aa).

It belongs to the YajQ family.

In terms of biological role, nucleotide-binding protein. In Synechococcus sp. (strain ATCC 27144 / PCC 6301 / SAUG 1402/1) (Anacystis nidulans), this protein is Nucleotide-binding protein syc0675_c.